The chain runs to 49 residues: DNA-directed RNA polymerase subunit Rpo12 (49 aa).

Cys11, Cys27, and Cys30 together coordinate Zn(2+).

This sequence belongs to the archaeal Rpo12/eukaryotic RPC10 RNA polymerase subunit family. As to quaternary structure, part of the RNA polymerase complex. The cofactor is Zn(2+).

Its subcellular location is the cytoplasm. The protein resides in the chromosome. It carries out the reaction RNA(n) + a ribonucleoside 5'-triphosphate = RNA(n+1) + diphosphate. In terms of biological role, DNA-dependent RNA polymerase (RNAP) catalyzes the transcription of DNA into RNA using the four ribonucleoside triphosphates as substrates. The chain is DNA-directed RNA polymerase subunit Rpo12 from Thermococcus kodakarensis (strain ATCC BAA-918 / JCM 12380 / KOD1) (Pyrococcus kodakaraensis (strain KOD1)).